A 395-amino-acid polypeptide reads, in one-letter code: Elongation factor Tu (395 aa).

The tr-type G domain maps to 10-204 (KSHVNVGTLG…AVDEYIPTPE (195 aa)). The G1 stretch occupies residues 19-26 (GHVDHGKT). Position 19 to 26 (19 to 26 (GHVDHGKT)) interacts with GTP. T26 serves as a coordination point for Mg(2+). The G2 stretch occupies residues 60 to 64 (GITIS). The tract at residues 81-84 (DCPG) is G3. Residues 81–85 (DCPGH) and 136–139 (NKTD) contribute to the GTP site. The tract at residues 136–139 (NKTD) is G4. The interval 174-176 (SAL) is G5.

Belongs to the TRAFAC class translation factor GTPase superfamily. Classic translation factor GTPase family. EF-Tu/EF-1A subfamily. Monomer.

It localises to the cytoplasm. It carries out the reaction GTP + H2O = GDP + phosphate + H(+). Its function is as follows. GTP hydrolase that promotes the GTP-dependent binding of aminoacyl-tRNA to the A-site of ribosomes during protein biosynthesis. This Oceanobacillus iheyensis (strain DSM 14371 / CIP 107618 / JCM 11309 / KCTC 3954 / HTE831) protein is Elongation factor Tu.